The sequence spans 128 residues: Large ribosomal subunit protein bL17 (128 aa).

The protein belongs to the bacterial ribosomal protein bL17 family. As to quaternary structure, part of the 50S ribosomal subunit. Contacts protein L32.

The chain is Large ribosomal subunit protein bL17 from Streptococcus gordonii (strain Challis / ATCC 35105 / BCRC 15272 / CH1 / DL1 / V288).